A 124-amino-acid chain; its full sequence is Aspartate 1-decarboxylase (124 aa).

The active-site Schiff-base intermediate with substrate; via pyruvic acid is S25. S25 is subject to Pyruvic acid (Ser). Substrate is bound at residue T57. Y58 serves as the catalytic Proton donor. 71 to 73 (GAA) contributes to the substrate binding site.

Belongs to the PanD family. Heterooctamer of four alpha and four beta subunits. Requires pyruvate as cofactor. Is synthesized initially as an inactive proenzyme, which is activated by self-cleavage at a specific serine bond to produce a beta-subunit with a hydroxyl group at its C-terminus and an alpha-subunit with a pyruvoyl group at its N-terminus.

It localises to the cytoplasm. The enzyme catalyses L-aspartate + H(+) = beta-alanine + CO2. The protein operates within cofactor biosynthesis; (R)-pantothenate biosynthesis; beta-alanine from L-aspartate: step 1/1. Its function is as follows. Catalyzes the pyruvoyl-dependent decarboxylation of aspartate to produce beta-alanine. The chain is Aspartate 1-decarboxylase from Bdellovibrio bacteriovorus (strain ATCC 15356 / DSM 50701 / NCIMB 9529 / HD100).